Reading from the N-terminus, the 364-residue chain is Protein leg1b (364 aa).

An N-terminal signal peptide occupies residues 1–22 (MSEMGFLRSVAAVLLLAVFSHA). Asn70 carries an N-linked (GlcNAc...) asparagine glycan.

Belongs to the LEG1 family. Detected in all tissues tested, with the highest levels in serum (at protein level). At mRNA level, only expressed in liver.

The protein resides in the secreted. Involved in early development of liver, exocrine pancreas and intestine, probably through cell cycle regulation. In liver, its function is partially redundant with leg1a function. The sequence is that of Protein leg1b from Danio rerio (Zebrafish).